A 339-amino-acid chain; its full sequence is 5-dehydro-2-deoxygluconokinase (339 aa).

The protein belongs to the carbohydrate kinase PfkB family.

It catalyses the reaction 5-dehydro-2-deoxy-D-gluconate + ATP = 6-phospho-5-dehydro-2-deoxy-D-gluconate + ADP + H(+). Its pathway is polyol metabolism; myo-inositol degradation into acetyl-CoA; acetyl-CoA from myo-inositol: step 5/7. Catalyzes the phosphorylation of 5-dehydro-2-deoxy-D-gluconate (2-deoxy-5-keto-D-gluconate or DKG) to 6-phospho-5-dehydro-2-deoxy-D-gluconate (DKGP). The chain is 5-dehydro-2-deoxygluconokinase from Clostridium beijerinckii (strain ATCC 51743 / NCIMB 8052) (Clostridium acetobutylicum).